The primary structure comprises 130 residues: Large ribosomal subunit protein bL12 (130 aa).

Belongs to the bacterial ribosomal protein bL12 family. In terms of assembly, homodimer. Part of the ribosomal stalk of the 50S ribosomal subunit. Forms a multimeric L10(L12)X complex, where L10 forms an elongated spine to which 2 to 4 L12 dimers bind in a sequential fashion. Binds GTP-bound translation factors.

Functionally, forms part of the ribosomal stalk which helps the ribosome interact with GTP-bound translation factors. Is thus essential for accurate translation. The sequence is that of Large ribosomal subunit protein bL12 from Mycolicibacterium gilvum (strain PYR-GCK) (Mycobacterium gilvum (strain PYR-GCK)).